Reading from the N-terminus, the 507-residue chain is ATP synthase subunit alpha, chloroplastic (507 aa).

Residue 170 to 177 (GDRQTGKT) coordinates ATP.

Belongs to the ATPase alpha/beta chains family. In terms of assembly, F-type ATPases have 2 components, CF(1) - the catalytic core - and CF(0) - the membrane proton channel. CF(1) has five subunits: alpha(3), beta(3), gamma(1), delta(1), epsilon(1). CF(0) has four main subunits: a, b, b' and c.

Its subcellular location is the plastid. It localises to the chloroplast thylakoid membrane. The enzyme catalyses ATP + H2O + 4 H(+)(in) = ADP + phosphate + 5 H(+)(out). Produces ATP from ADP in the presence of a proton gradient across the membrane. The alpha chain is a regulatory subunit. The chain is ATP synthase subunit alpha, chloroplastic from Nicotiana tomentosiformis (Tobacco).